Reading from the N-terminus, the 123-residue chain is Small ribosomal subunit protein uS12cz/uS12cy (123 aa).

It belongs to the universal ribosomal protein uS12 family. As to quaternary structure, part of the 30S ribosomal subunit.

It is found in the plastid. It localises to the chloroplast. Its function is as follows. With S4 and S5 plays an important role in translational accuracy. Located at the interface of the 30S and 50S subunits. In Citrus sinensis (Sweet orange), this protein is Small ribosomal subunit protein uS12cz/uS12cy (rps12-A).